A 500-amino-acid polypeptide reads, in one-letter code: Potassium voltage-gated channel subfamily V member 1 (500 aa).

Residues 1-210 (MPSSGRALLD…EKPGSSTAAR (210 aa)) lie on the Cytoplasmic side of the membrane. Residues 168-181 (KKDTEDQESQHESE) show a composition bias toward basic and acidic residues. Positions 168–189 (KKDTEDQESQHESEQDFSQGPC) are disordered. Residues 211–231 (IFGVISIIFVVVSIINMALMS) form a helical membrane-spanning segment. Residues 232-238 (AELSWLD) lie on the Extracellular side of the membrane. The helical transmembrane segment at 239 to 259 (LQLLEILEYVCISWFTGEFVL) threads the bilayer. The Cytoplasmic portion of the chain corresponds to 260–276 (RFLCVRDRCRFLRKVPN). The chain crosses the membrane as a helical span at residues 277-297 (IIDLLAILPFYITLLVESLSG). Over 298-309 (SQTTQELENVGR) the chain is Extracellular. A helical; Voltage-sensor transmembrane segment spans residues 310 to 331 (IVQVLRLLRALRMLKLGRHSTG). At 332-345 (LRSLGMTITQCYEE) the chain is on the cytoplasmic side. The helical transmembrane segment at 346 to 366 (VGLLLLFLSVGISIFSTVEYF) threads the bilayer. The Selectivity filter motif lies at 392–397 (TVGYGD). A helical transmembrane segment spans residues 407 to 427 (IVAFMCILSGILVLALPIAII). The Cytoplasmic segment spans residues 428-500 (NDRFSACYFT…RSSGGDDFWF (73 aa)).

This sequence belongs to the potassium channel family. V (TC 1.A.1.2) subfamily. Kv8.1/KCNV1 sub-subfamily. As to quaternary structure, heteromultimer with KCNB1 and KCNB2. Interacts with KCNC4 and KCND1. In terms of tissue distribution, detected in brain.

The protein localises to the cell membrane. Its function is as follows. Potassium channel subunit that does not form functional channels by itself. Modulates KCNB1 and KCNB2 channel activity by shifting the threshold for inactivation to more negative values and by slowing the rate of inactivation. Can down-regulate the channel activity of KCNB1, KCNB2, KCNC4 and KCND1, possibly by trapping them in intracellular membranes. In Homo sapiens (Human), this protein is Potassium voltage-gated channel subfamily V member 1 (KCNV1).